Reading from the N-terminus, the 46-residue chain is Delta-actitoxin-Avd1d (46 aa).

Intrachain disulfides connect C4–C44, C6–C34, and C27–C45.

This sequence belongs to the sea anemone sodium channel inhibitory toxin family. Type I subfamily.

The protein resides in the secreted. It is found in the nematocyst. Functionally, binds specifically to voltage-gated sodium channels (Nav), thereby delaying their inactivation during signal transduction. Thus it strongly stimulates mammalian cardiac muscle contraction. The protein is Delta-actitoxin-Avd1d of Anemonia sulcata (Mediterranean snakelocks sea anemone).